Here is a 249-residue protein sequence, read N- to C-terminus: 23S rRNA (guanosine-2'-O-)-methyltransferase RlmB (249 aa).

Residues Gly-197, Ile-217, and Leu-226 each coordinate S-adenosyl-L-methionine.

This sequence belongs to the class IV-like SAM-binding methyltransferase superfamily. RNA methyltransferase TrmH family. RlmB subfamily.

It is found in the cytoplasm. It catalyses the reaction guanosine(2251) in 23S rRNA + S-adenosyl-L-methionine = 2'-O-methylguanosine(2251) in 23S rRNA + S-adenosyl-L-homocysteine + H(+). In terms of biological role, specifically methylates the ribose of guanosine 2251 in 23S rRNA. In Ralstonia nicotianae (strain ATCC BAA-1114 / GMI1000) (Ralstonia solanacearum), this protein is 23S rRNA (guanosine-2'-O-)-methyltransferase RlmB.